The following is a 449-amino-acid chain: UDP-N-acetylmuramoylalanine--D-glutamate ligase (449 aa).

An ATP-binding site is contributed by 118–124; sequence GTNGKTT.

The protein belongs to the MurCDEF family.

Its subcellular location is the cytoplasm. The enzyme catalyses UDP-N-acetyl-alpha-D-muramoyl-L-alanine + D-glutamate + ATP = UDP-N-acetyl-alpha-D-muramoyl-L-alanyl-D-glutamate + ADP + phosphate + H(+). It functions in the pathway cell wall biogenesis; peptidoglycan biosynthesis. Cell wall formation. Catalyzes the addition of glutamate to the nucleotide precursor UDP-N-acetylmuramoyl-L-alanine (UMA). This is UDP-N-acetylmuramoylalanine--D-glutamate ligase from Staphylococcus aureus (strain MW2).